We begin with the raw amino-acid sequence, 297 residues long: Cell death peptidase (297 aa).

The next 2 membrane-spanning stretches (helical) occupy residues I61–T82 and I149–T178.

Belongs to the peptidase U49 family.

Its subcellular location is the cell membrane. Interacts with a short DNA sequence about one-quarter of the way into the major capsid protein gene 23 of T4; general translation inhibition occurs when this late gene of the virus is expressed. The polypeptide is Cell death peptidase (lit) (Escherichia coli (strain K12)).